Reading from the N-terminus, the 122-residue chain is Large ribosomal subunit protein uL14 (122 aa).

Belongs to the universal ribosomal protein uL14 family. As to quaternary structure, part of the 50S ribosomal subunit. Forms a cluster with proteins L3 and L19. In the 70S ribosome, L14 and L19 interact and together make contacts with the 16S rRNA in bridges B5 and B8.

Functionally, binds to 23S rRNA. Forms part of two intersubunit bridges in the 70S ribosome. In Paracoccus denitrificans (strain Pd 1222), this protein is Large ribosomal subunit protein uL14.